The sequence spans 580 residues: NADH-quinone oxidoreductase subunit C/D (580 aa).

Residues 1-171 (MSLDQAIPEA…PPFVLTDRLF (171 aa)) form an NADH dehydrogenase I subunit C region. Residues 195 to 580 (ELMVLNFGPH…IDFVMSDVDR (386 aa)) form an NADH dehydrogenase I subunit D region.

The protein in the N-terminal section; belongs to the complex I 30 kDa subunit family. This sequence in the C-terminal section; belongs to the complex I 49 kDa subunit family. As to quaternary structure, NDH-1 is composed of 13 different subunits. Subunits NuoB, CD, E, F, and G constitute the peripheral sector of the complex.

It localises to the cell inner membrane. The enzyme catalyses a quinone + NADH + 5 H(+)(in) = a quinol + NAD(+) + 4 H(+)(out). In terms of biological role, NDH-1 shuttles electrons from NADH, via FMN and iron-sulfur (Fe-S) centers, to quinones in the respiratory chain. The immediate electron acceptor for the enzyme in this species is believed to be ubiquinone. Couples the redox reaction to proton translocation (for every two electrons transferred, four hydrogen ions are translocated across the cytoplasmic membrane), and thus conserves the redox energy in a proton gradient. The sequence is that of NADH-quinone oxidoreductase subunit C/D from Cereibacter sphaeroides (strain ATCC 17029 / ATH 2.4.9) (Rhodobacter sphaeroides).